The chain runs to 265 residues: Lipopolysaccharide core heptose(I) kinase WaaP (265 aa).

Asp162 is an active-site residue.

Belongs to the protein kinase superfamily. KdkA/RfaP family. Mg(2+) serves as cofactor.

It catalyses the reaction an L-alpha-D-Hep-(1-&gt;3)-L-alpha-D-Hep-(1-&gt;5)-[alpha-Kdo-(2-&gt;4)]-alpha-Kdo-(2-&gt;6)-lipid A + ATP = an L-alpha-D-Hep-(1-&gt;3)-4-O-phospho-L-alpha-D-Hep-(1-&gt;5)-[alpha-Kdo-(2-&gt;4)]-alpha-Kdo-(2-&gt;6)-lipid A + ADP + H(+). The catalysed reaction is L-alpha-D-Hep-(1-&gt;3)-L-alpha-D-Hep-(1-&gt;5)-[alpha-Kdo-(2-&gt;4)]-alpha-Kdo-(2-&gt;6)-lipid A (E. coli) + ATP = L-alpha-D-Hep-(1-&gt;3)-4-O-phospho-L-alpha-D-Hep-(1-&gt;5)-[alpha-Kdo-(2-&gt;4)]-alpha-Kdo-(2-&gt;6)-lipid A (E. coli) + ADP + H(+). It functions in the pathway bacterial outer membrane biogenesis; LPS core biosynthesis. In terms of biological role, kinase involved in the biosynthesis of the core oligosaccharide region of lipopolysaccharide (LPS). Catalyzes the phosphorylation of heptose I (HepI), the first heptose added to the Kdo2-lipid A module. The sequence is that of Lipopolysaccharide core heptose(I) kinase WaaP from Escherichia coli (strain K12).